The chain runs to 48 residues: Large ribosomal subunit protein bL33A (48 aa).

Belongs to the bacterial ribosomal protein bL33 family.

The polypeptide is Large ribosomal subunit protein bL33A (Metamycoplasma arthritidis (strain 158L3-1) (Mycoplasma arthritidis)).